The primary structure comprises 959 residues: Glycine dehydrogenase (decarboxylating) (959 aa).

Lys-708 bears the N6-(pyridoxal phosphate)lysine mark.

Belongs to the GcvP family. In terms of assembly, the glycine cleavage system is composed of four proteins: P, T, L and H. Pyridoxal 5'-phosphate serves as cofactor.

It catalyses the reaction N(6)-[(R)-lipoyl]-L-lysyl-[glycine-cleavage complex H protein] + glycine + H(+) = N(6)-[(R)-S(8)-aminomethyldihydrolipoyl]-L-lysyl-[glycine-cleavage complex H protein] + CO2. Functionally, the glycine cleavage system catalyzes the degradation of glycine. The P protein binds the alpha-amino group of glycine through its pyridoxal phosphate cofactor; CO(2) is released and the remaining methylamine moiety is then transferred to the lipoamide cofactor of the H protein. This is Glycine dehydrogenase (decarboxylating) from Yersinia enterocolitica serotype O:8 / biotype 1B (strain NCTC 13174 / 8081).